A 446-amino-acid polypeptide reads, in one-letter code: tRNA-2-methylthio-N(6)-dimethylallyladenosine synthase (446 aa).

Positions 3-120 (KKLFIETHGC…LPEMIDAARS (118 aa)) constitute an MTTase N-terminal domain. Cys12, Cys49, Cys83, Cys157, Cys161, and Cys164 together coordinate [4Fe-4S] cluster. The region spanning 143-375 (RVDGPTAFVS…QSRIHQQGYE (233 aa)) is the Radical SAM core domain. The TRAM domain occupies 378 to 442 (RRMVGSTQRI…PHSLRGTLID (65 aa)).

It belongs to the methylthiotransferase family. MiaB subfamily. As to quaternary structure, monomer. It depends on [4Fe-4S] cluster as a cofactor.

Its subcellular location is the cytoplasm. It catalyses the reaction N(6)-dimethylallyladenosine(37) in tRNA + (sulfur carrier)-SH + AH2 + 2 S-adenosyl-L-methionine = 2-methylsulfanyl-N(6)-dimethylallyladenosine(37) in tRNA + (sulfur carrier)-H + 5'-deoxyadenosine + L-methionine + A + S-adenosyl-L-homocysteine + 2 H(+). Functionally, catalyzes the methylthiolation of N6-(dimethylallyl)adenosine (i(6)A), leading to the formation of 2-methylthio-N6-(dimethylallyl)adenosine (ms(2)i(6)A) at position 37 in tRNAs that read codons beginning with uridine. This is tRNA-2-methylthio-N(6)-dimethylallyladenosine synthase from Pseudomonas aeruginosa (strain UCBPP-PA14).